Here is a 541-residue protein sequence, read N- to C-terminus: MEALLEGIQNRGHGGGFLTSCEAELQELMKQIDIMVAHKKSEWEGRTHALETCLKIREQELKSLRSQLDVTHKEVGMLHQQVEEHEKIKQEMTMEYKQELKKLHEELGILKRSYEKLQKKQMREFRGNTKNHREDRSEIERLTAKIEEFRQKSLDWEKQRLIYQQQVSSLEAQRKALAEQSEIIQAQLANRKQKLESVELSSQSEIQHLSSKLERANDTICANELEIERLTMRVNDLVGTSMTVLQEQQQKEEKLRESEKLLEALQEEKRELKAALQSQENLIHEARIQKEKLQEKVKATDTQHAVEAIRPREESPAEKKYTSQGQGDLDSVLFQLNFTHTSEDLLQAEVTRLEGSLESVSATCKQLSQELMEKYEELKRMEAHNNEYKAEIKKLKEQILQGEQSYSSALEGMKMEISHLTQELHQRDITIASTKGSSSDMEKRLRAEMQKAEDKAVEHKEILDQLESLKLENRHLSEMVMKLELGLHECSLPVSPLGSIATRFLEEEELRSHHILERLDAHIEELKRESEKTVRQFTALK.

M1 bears the N-acetylmethionine mark. Coiled-coil stretches lie at residues 22–199 (EAEL…ESVE) and 242–305 (MTVL…TQHA). The residue at position 278 (S278) is a Phosphoserine. The tract at residues 294-324 (QEKVKATDTQHAVEAIRPREESPAEKKYTSQ) is disordered. Positions 307 to 321 (EAIRPREESPAEKKY) are enriched in basic and acidic residues. Coiled-coil stretches lie at residues 346–485 (LQAE…KLEL) and 514–541 (HILERLDAHIEELKRESEKTVRQFTALK).

This sequence belongs to the CEP63 family. In terms of assembly, interacts with CEP152 and CDK1; these interactions recruit both ligands to centrosomes. Interacts with CDK2, CDK5RAP2, WDR62, CEP90, KIAA0753/moonraker and CCDC14. CEP63, CDK5RAP2, CEP152, WDR62 are proposed to form a stepwise assembled complex at the centrosome forming a ring near parental centrioles. Interacts with CCDC57; the interaction is required for their location to proximal end of centrioles. Interacts with FXR1; promoting its stabilization. Post-translationally, polyubiquitinated via 'Lys-48'-linked ubiquitin, leading to its degradation. Deubiquitinated by USP36, promoting its stabilization.

The protein localises to the cytoplasm. The protein resides in the cytoskeleton. It localises to the microtubule organizing center. It is found in the centrosome. Its subcellular location is the centriole. The protein localises to the centriolar satellite. Required for normal spindle assembly. Plays a key role in mother-centriole-dependent centriole duplication; the function seems also to involve CEP152, CDK5RAP2 and WDR62 through a stepwise assembled complex at the centrosome that recruits CDK2 required for centriole duplication. Reported to be required for centrosomal recruitment of CEP152; however, this function has been questioned. Also recruits CDK1 to centrosomes. Plays a role in DNA damage response. Following DNA damage, such as double-strand breaks (DSBs), is removed from centrosomes; this leads to the inactivation of spindle assembly and delay in mitotic progression. Promotes stabilization of FXR1 protein by inhibiting FXR1 ubiquitination. The polypeptide is Centrosomal protein of 63 kDa (CEP63) (Pongo abelii (Sumatran orangutan)).